The chain runs to 949 residues: Glycine dehydrogenase (decarboxylating) (949 aa).

Lys-704 bears the N6-(pyridoxal phosphate)lysine mark.

This sequence belongs to the GcvP family. In terms of assembly, the glycine cleavage system is composed of four proteins: P, T, L and H. Requires pyridoxal 5'-phosphate as cofactor.

The enzyme catalyses N(6)-[(R)-lipoyl]-L-lysyl-[glycine-cleavage complex H protein] + glycine + H(+) = N(6)-[(R)-S(8)-aminomethyldihydrolipoyl]-L-lysyl-[glycine-cleavage complex H protein] + CO2. In terms of biological role, the glycine cleavage system catalyzes the degradation of glycine. The P protein binds the alpha-amino group of glycine through its pyridoxal phosphate cofactor; CO(2) is released and the remaining methylamine moiety is then transferred to the lipoamide cofactor of the H protein. The chain is Glycine dehydrogenase (decarboxylating) from Bacteroides fragilis (strain YCH46).